Reading from the N-terminus, the 38-residue chain is Photosystem II reaction center protein X 1 (38 aa).

Residues phenylalanine 8–phenylalanine 28 traverse the membrane as a helical segment.

The protein belongs to the PsbX family. Type 1 subfamily. PSII is composed of 1 copy each of membrane proteins PsbA, PsbB, PsbC, PsbD, PsbE, PsbF, PsbH, PsbI, PsbJ, PsbK, PsbL, PsbM, PsbT, PsbX, PsbY, PsbZ, Psb30/Ycf12, peripheral proteins PsbO, CyanoQ (PsbQ), PsbU, PsbV and a large number of cofactors. It forms dimeric complexes.

It localises to the cellular thylakoid membrane. Involved in the binding and/or turnover of quinones at the Q(B) site of photosystem II (PSII). PSII is a light-driven water plastoquinone oxidoreductase, using light energy to abstract electrons from H(2)O, generating a proton gradient subsequently used for ATP formation. This Synechococcus sp. (strain JA-3-3Ab) (Cyanobacteria bacterium Yellowstone A-Prime) protein is Photosystem II reaction center protein X 1.